The chain runs to 73 residues: Plasticin-A1 (73 aa).

A signal peptide spans 1–22 (MAFLKKSLFLVLFLAIVPLSIC). A propeptide spanning residues 23 to 42 (EEEKREEENEEKQEDDDQSE) is cleaved from the precursor. Positions 25–45 (EKREEENEEKQEDDDQSEKRG) are disordered. Positions 30-40 (ENEEKQEDDDQ) are enriched in acidic residues. Glycine 70 carries the glycine amide modification. Residues 72–73 (ES) constitute a propeptide that is removed on maturation.

The protein belongs to the frog skin active peptide (FSAP) family. Plasticin subfamily. In terms of tissue distribution, expressed by the skin glands.

It is found in the secreted. Its subcellular location is the target cell membrane. Functionally, peptide with no antimicrobial activity. May act in synergy with cationic peptides by enhancing their activity. Has a moderate hemolytic activity. This Agalychnis annae (Blue-sided leaf frog) protein is Plasticin-A1.